The sequence spans 398 residues: Phosphoglycerate kinase (398 aa).

Substrate-binding positions include 23-25, arginine 38, 61-64, arginine 122, and arginine 155; these read DFN and HMGK. ATP-binding positions include lysine 206, glycine 297, glutamate 328, and 354-357; that span reads GGDS.

The protein belongs to the phosphoglycerate kinase family. In terms of assembly, monomer.

The protein localises to the cytoplasm. The enzyme catalyses (2R)-3-phosphoglycerate + ATP = (2R)-3-phospho-glyceroyl phosphate + ADP. It participates in carbohydrate degradation; glycolysis; pyruvate from D-glyceraldehyde 3-phosphate: step 2/5. The sequence is that of Phosphoglycerate kinase from Clostridium botulinum (strain Hall / ATCC 3502 / NCTC 13319 / Type A).